A 278-amino-acid chain; its full sequence is Probable esterase TOX9 (278 aa).

Catalysis depends on charge relay system residues Ser-119, Asp-222, and His-250.

The protein belongs to the LovG family.

Its pathway is mycotoxin biosynthesis. Functionally, probable esterase; part of the Tox1A locus, one of the 2 loci that mediate the biosynthesis of T-toxin, a family of linear polyketides 37 to 45 carbons in length, of which the major component is 41 carbons, and which leads to high virulence to maize. One of the PKSs (PKS1 or PKS2) could synthesize a precursor, used subsequently by the other PKS as starter unit, to add additional carbons. Variability in the length of the final carbon backbone C35-47 could be achieved by varying the number of condensation cycles, or use of different starter or extender units or might be due to decarboxylation of the penultimate product, catalyzed by DEC1. Additional proteins are required for the biosynthesis of T-toxin, including oxidoreductases RED1, RED2, RED3, LAM1 and OXI1, as well as esterase TOX9. The polypeptide is Probable esterase TOX9 (Cochliobolus heterostrophus (strain C4 / ATCC 48331 / race T) (Southern corn leaf blight fungus)).